A 525-amino-acid chain; its full sequence is Bifunctional purine biosynthesis protein PurH (525 aa).

One can recognise an MGS-like domain in the interval 10-156 (HRIPIRRALV…KNHPSVAIVT (147 aa)).

This sequence belongs to the PurH family.

It carries out the reaction (6R)-10-formyltetrahydrofolate + 5-amino-1-(5-phospho-beta-D-ribosyl)imidazole-4-carboxamide = 5-formamido-1-(5-phospho-D-ribosyl)imidazole-4-carboxamide + (6S)-5,6,7,8-tetrahydrofolate. It catalyses the reaction IMP + H2O = 5-formamido-1-(5-phospho-D-ribosyl)imidazole-4-carboxamide. Its pathway is purine metabolism; IMP biosynthesis via de novo pathway; 5-formamido-1-(5-phospho-D-ribosyl)imidazole-4-carboxamide from 5-amino-1-(5-phospho-D-ribosyl)imidazole-4-carboxamide (10-formyl THF route): step 1/1. The protein operates within purine metabolism; IMP biosynthesis via de novo pathway; IMP from 5-formamido-1-(5-phospho-D-ribosyl)imidazole-4-carboxamide: step 1/1. The polypeptide is Bifunctional purine biosynthesis protein PurH (Nocardioides sp. (strain ATCC BAA-499 / JS614)).